The chain runs to 672 residues: MSDPEGETLRSTFPSYMAEGERLYLCGEFSKAAQSFSNALYLQDGDKNCLVARSKCFLKMGDLERSLKDAEASLQSDPAFCKGILQKAETLYTMGDFEFALVFYHRGYKLRPDREFRVGIQKAQEAINNSVGSPSSIKLENKGDLSFLSKQAENIKAQQKPQPMKHLLHPTKGEPKWKASLKSEKTVRQLLGELYVDKEYLEKLLLDEDLIKGTMKGGLTVEDLIMTGINYLDTHSNFWRQQKPIYARERDRKLMQEKWLRDHKRRPSQTAHYILKSLEDIDMLLTSGSAEGSLQKAEKVLKKVLEWNKEEVPNKDELVGNLYSCIGNAQIELGQMEAALQSHRKDLEIAKEYDLPDAKSRALDNIGRVFARVGKFQQAIDTWEEKIPLAKTTLEKTWLFHEIGRCYLELDQAWQAQNYGEKSQQCAEEEGDIEWQLNASVLVAQAQVKLRDFESAVNNFEKALERAKLVHNNEAQQAIISALDDANKGIIRELRKTNYVENLKEKSEGEASLYEDRIITREKDMRRVRDEPEKVVKQWDHSEDEKETDEDDEAFGEALQSPASGKQSVEAGKARSDLGAVAKGLSGELGTRSGETGRKLLEAGRRESREIYRRPSGELEQRLSGEFSRQEPEELKKLSEVGRREPEELGKTQFGEIGETKKTGNEMEKEYE.

TPR repeat units lie at residues 13–46 (FPSYMAEGERLYLCGEFSKAAQSFSNALYLQDGD), 48–80 (NCLVARSKCFLKMGDLERSLKDAEASLQSDPAF), 81–114 (CKGILQKAETLYTMGDFEFALVFYHRGYKLRPDR), 275–311 (LKSLEDIDMLLTSGSAEGSLQKAEKVLKKVLEWNKEE), 320–353 (GNLYSCIGNAQIELGQMEAALQSHRKDLEIAKEY), 360–393 (SRALDNIGRVFARVGKFQQAIDTWEEKIPLAKTT), 397–430 (TWLFHEIGRCYLELDQAWQAQNYGEKSQQCAEEE), and 437–470 (LNASVLVAQAQVKLRDFESAVNNFEKALERAKLV). Residues 527 to 544 (RVRDEPEKVVKQWDHSED) show a composition bias toward basic and acidic residues. The interval 527 to 672 (RVRDEPEKVV…TGNEMEKEYE (146 aa)) is disordered. Over residues 545–555 (EKETDEDDEAF) the composition is skewed to acidic residues. 2 stretches are compositionally biased toward basic and acidic residues: residues 595-650 (ETGR…EELG) and 658-672 (GETKKTGNEMEKEYE).

As to quaternary structure, component of the outer dynein arm-docking complex along with ODAD1, ODAD2 and ODAD3. Interacts with ODAD1; this interaction may facilitate the recruitment and/or attachment of outer dynein arm docking complex proteins, including ODAD1, ODAD3 and ODAD2, to ciliary axonemes. Interacts with components of the IFT complex A, including IFT140, TTC21B/IFT139 and WDR19/IFT144, and the IFT complex B, including IFT46, IFT52 and IFT57. Interacts with CFAP53. As to expression, expressed in the nasal mucosa (at protein level).

The protein localises to the cytoplasm. The protein resides in the cytoskeleton. Its subcellular location is the cilium axoneme. In terms of biological role, component of the outer dynein arm-docking complex (ODA-DC) that mediates outer dynein arms (ODA) binding onto the doublet microtubule. Plays an essential role for the assembly of ODA-DC and for the docking of ODA in ciliary axoneme. The polypeptide is Outer dynein arm-docking complex subunit 4 (Homo sapiens (Human)).